A 92-amino-acid polypeptide reads, in one-letter code: UPF0358 protein SH1840 (92 aa).

It belongs to the UPF0358 family.

This is UPF0358 protein SH1840 from Staphylococcus haemolyticus (strain JCSC1435).